Consider the following 86-residue polypeptide: Superoxide dismutase [Cu-Zn] (86 aa).

Residues 1–26 (AKEKGGKLTAGLAAGGHWNPNKAPHH) are disordered. A compositionally biased stretch (low complexity) spans 7–16 (KLTAGLAAGG). H17 contacts Cu cation. Zn(2+)-binding residues include H17, H26, H35, and D38. H73 contacts Cu cation.

This sequence belongs to the Cu-Zn superoxide dismutase family. Homodimer. Requires Cu cation as cofactor. Zn(2+) is required as a cofactor.

It localises to the periplasm. The enzyme catalyses 2 superoxide + 2 H(+) = H2O2 + O2. In terms of biological role, destroys radicals which are normally produced within the cells and which are toxic to biological systems. The sequence is that of Superoxide dismutase [Cu-Zn] (sodC) from Mannheimia haemolytica (Pasteurella haemolytica).